Consider the following 196-residue polypeptide: MPIGVPKVPFRSPGEGDTSWVDIYNRLYRERLFFLGQEVDTEISNQLISLMIYLSIEKDTKDLYLFINSPGGWVISGMAIYDTMQFVRPDVQTICMGLAASIASFILVGGEITKRIAFPHARVMIHQPASSFYEAQTGEFILEAEELLKLRETITRVYVQRTGKPIWVVSEDMERDVFMSATEAQAHGIVDLVAVQ.

Catalysis depends on Ser101, which acts as the Nucleophile. The active site involves His126.

The protein belongs to the peptidase S14 family. Component of the chloroplastic Clp protease core complex.

The protein localises to the plastid. It localises to the chloroplast stroma. It catalyses the reaction Hydrolysis of proteins to small peptides in the presence of ATP and magnesium. alpha-casein is the usual test substrate. In the absence of ATP, only oligopeptides shorter than five residues are hydrolyzed (such as succinyl-Leu-Tyr-|-NHMec, and Leu-Tyr-Leu-|-Tyr-Trp, in which cleavage of the -Tyr-|-Leu- and -Tyr-|-Trp bonds also occurs).. Cleaves peptides in various proteins in a process that requires ATP hydrolysis. Has a chymotrypsin-like activity. Plays a major role in the degradation of misfolded proteins. This is ATP-dependent Clp protease proteolytic subunit from Lobularia maritima (Sweet alyssum).